Consider the following 128-residue polypeptide: UPF0102 protein MAV_3752 (128 aa).

Belongs to the UPF0102 family.

This Mycobacterium avium (strain 104) protein is UPF0102 protein MAV_3752.